The chain runs to 535 residues: Triacylglyceride transporter MHAS_02168/C731_2106 (535 aa).

Over 1-18 (MAFPQTPNRLIRPRRTSR) the chain is Cytoplasmic. The chain crosses the membrane as a helical span at residues 19 to 39 (GIAISAGGLAVLLGALDTYVV). Topologically, residues 40–60 (VSIVTDIMRDVGIAVNQIQRV) are periplasmic. The helical transmembrane segment at 61-82 (TPIITGYLLGYIAAMPLLGRAS) threads the bilayer. The Cytoplasmic portion of the chain corresponds to 83 to 86 (DRFG). The helical transmembrane segment at 87-107 (RKLLIQISLAGFALGSVITAL) threads the bilayer. Topologically, residues 108 to 111 (ATNL) are periplasmic. The helical transmembrane segment at 112–136 (DVLVAGRVIQGAASGALLPVTLALA) threads the bilayer. Residues 137-145 (ADLWATHKR) are Cytoplasmic-facing. A helical membrane pass occupies residues 146–167 (AAVLGGVGAAQELGAVLGPIYG). Topologically, residues 168–177 (IFVVWLFHHW) are periplasmic. The chain crosses the membrane as a helical span at residues 178–198 (QAVFWVNVPLALIAMVLIHIS). The Cytoplasmic portion of the chain corresponds to 199–212 (LPPRVRTEEPQRVD). The chain crosses the membrane as a helical span at residues 213-230 (VTGGLLLALALGLATIGL). The Periplasmic portion of the chain corresponds to 231-243 (YNAEPDGKQVLPE). The helical transmembrane segment at 244–263 (YGPPLIIGAVIAAVAFLVWE) threads the bilayer. Topologically, residues 264–278 (RFARTRLLDPAGVRF) are cytoplasmic. A helical transmembrane segment spans residues 279–300 (RPFLIALLVSLVTGGALMVTLV). Over 301–320 (NVELFGQGVLGLDQDEAVFL) the chain is Periplasmic. 2 helical membrane passes run 321–343 (LARF…TRVG) and 344–364 (DRAV…LIAQ). Residues 365 to 384 (WPADVLESRHDLGFVSLPTL) are Periplasmic-facing. Positions 373 to 382 (RHDLGFVSLP) are beta-hairpin. Residues 385–407 (DTDLAIAGFGLGLVIAPLTSAAL) traverse the membrane as a helical segment. Residues 408-415 (RVVPAAQH) lie on the Cytoplasmic side of the membrane. A helical transmembrane segment spans residues 416-440 (GIASAAVVVARMIGMLIGIAALSAW). Over 441 to 487 (GLYRFNQYLKEQLAALPPAPADFPGGQMAGQMMRLRTATVQAYVLQY) the chain is Periplasmic. The helical transmembrane segment at 488-507 (GEIFAITAGLCVFGAVLGLF) threads the bilayer. The Cytoplasmic segment spans residues 508-535 (IAGRREHAEESADAVDGVSNARDRAPSA).

This sequence belongs to the major facilitator superfamily. P55 (TC 2.A.1.3.34) family.

It localises to the cell inner membrane. Functionally, in association with lipoprotein LprG transports triacylglycerides (TAG) across the inner cell membrane, probably transfering them to lipoprotein LprG in the periplasm. TAG probably regulates lipid metabolism and growth regulation and plays a structural role in the outer membrane. Mutagenesis and molecular modeling suggests TAG (and maybe other lipids) enters the central cavity of the P55 transporter from within the cell inner membrane via clefts on the cytoplasmic face of P55 between TM5-TM8 and TM2-TM11. From there the lipid is probably transferred to the hydrophobic cavity of LprG. The lprG-MHAS_02167/C731_2107 operon complements the vancomycin sensitivity of an M.smegmatis knockout of the same operon. Probably required with LprG for normal surface localization of lipoarabinomannan (LAM). This is Triacylglyceride transporter MHAS_02168/C731_2106 from Mycolicibacterium hassiacum (strain DSM 44199 / CIP 105218 / JCM 12690 / 3849) (Mycobacterium hassiacum).